Here is a 302-residue protein sequence, read N- to C-terminus: uncharacterized protein (302 aa).

Residues N32, N39, and N94 are each glycosylated (N-linked (GlcNAc...) asparagine). A ShKT domain is found at 80 to 115 (CRDTDMNCAVWVATNTSDCENVELVNSHCPRTCQTC). Intrachain disulfides connect C80/C115, C87/C108, and C98/C112. An N-linked (GlcNAc...) asparagine glycan is attached at N181.

This is an uncharacterized protein from Caenorhabditis elegans.